Here is a 902-residue protein sequence, read N- to C-terminus: MGRRNRRATRHGESSKSALIDCHIPEEHFLQSTDPKEKTKNAGGAVEHTPLMKQFFAAKSDYPDLLLFFRMGDFYELFYDDARKAARLLDITLTQRGSSGGAPIPMAGVPVHAYEGYLARLVALGESVAICEQIGDPALAKGLVERKVVRIVTPGTVTDEALLDERRDTLLMAISRSKQGYGLAWADLAGGRFLVNEVDSADALEAEIARLEPAELLVPDEDNWPEFLRGRIGVRRRPPWLFDADSGRRQLLAFFKLHDLSGFGIDDKPCATAAAGALLGYVEETQKQRLPHLTSIAMEVASEAISMNAATRRHLELDTRVDGDTRNTLLGVLDSTVTPMGGRLLRRWLHRPLRLRDVLVQRHHAVGTLIDAAADADLREAFRALGDLERILTRVALRSARPRDFSTLRDGLALLPKVRAILAPLDSPRLQALHAELGEHDATAHLLISAVAETPPLKLSDGGVIATGYDADLDELRRLSTNADQFLIDLEQRERASSGIATLKVGYNRVHGYYIEISKGQAEKAPLHYSRRQTLTNAERYITEELKSFEDKVLSARERSLSREKLLYEGLLDALGTELEGLKRCAGALSELDVLAGFAERAQALDWSQPELDSAPCLRIERGRHPVVEAVREQPFEPNDLDLHSDRRMLVITGPNMGGKSTYMRQNALIVLLAHIGSYVPASRAVIGPIDRILTRIGAGDDLARGQSTFMVEMAETSYILHHATPQSLVLMDEIGRGTSTYDGLALADAVARHLAQTNRCYTLFATHYFELTALADASHAGGASGIANVHLDAVEHGERLVFMHAVKDGPANRSFGLQVAALAGLPKAAVTQARRRLAELEQRGGESHSAQMAPTALDAPQQFGLFTAPSSAAQEALQALDPDELTPKQALEALYRLKALL.

654–661 is a binding site for ATP; the sequence is GPNMGGKS.

It belongs to the DNA mismatch repair MutS family.

In terms of biological role, this protein is involved in the repair of mismatches in DNA. It is possible that it carries out the mismatch recognition step. This protein has a weak ATPase activity. The sequence is that of DNA mismatch repair protein MutS from Xanthomonas axonopodis pv. citri (strain 306).